The primary structure comprises 353 residues: (-)-beta-caryophyllene synthase ((2E,6E)-farnesyl diphosphate cyclizing) (353 aa).

2 residues coordinate Mg(2+): D85 and D89. Positions 85 to 89 (DDQFD) match the DDXXD motif motif. Position 179 (R179) interacts with substrate. The Mg(2+) site is built by N225 and S229. K232 is a binding site for substrate. E233 contacts Mg(2+). 320–321 (RF) is a substrate binding site.

Belongs to the terpene synthase family. It depends on Mg(2+) as a cofactor.

It catalyses the reaction (2E,6E)-farnesyl diphosphate = (-)-(E)-beta-caryophyllene + diphosphate. It functions in the pathway secondary metabolite biosynthesis; terpenoid biosynthesis. Catalyzes the conversion of (2E,6E)-farnesyl diphosphate (FPP) to yield the bicyclic sesquiterpene (2S,10R)-(-)-(E)-beta-caryophyllene via a probable 1,10-cyclization, which could involve the abstraction of the pyrophosphate from FPP to yield a (E,E)-germacradienyl cation. In Saccharothrix espanaensis (strain ATCC 51144 / DSM 44229 / JCM 9112 / NBRC 15066 / NRRL 15764), this protein is (-)-beta-caryophyllene synthase ((2E,6E)-farnesyl diphosphate cyclizing) (ptlA).